Here is a 391-residue protein sequence, read N- to C-terminus: tRNA-specific 2-thiouridylase MnmA (391 aa).

Residues 9-16 (GMSGGVDS) and methionine 35 each bind ATP. The tract at residues 95-97 (NPD) is interaction with target base in tRNA. Cysteine 100 serves as the catalytic Nucleophile. Cysteines 100 and 196 form a disulfide. Residue glycine 124 coordinates ATP. The interaction with tRNA stretch occupies residues 146–148 (KDQ). Cysteine 196 serves as the catalytic Cysteine persulfide intermediate. The tract at residues 308–309 (RY) is interaction with tRNA.

This sequence belongs to the MnmA/TRMU family.

It is found in the cytoplasm. The enzyme catalyses S-sulfanyl-L-cysteinyl-[protein] + uridine(34) in tRNA + AH2 + ATP = 2-thiouridine(34) in tRNA + L-cysteinyl-[protein] + A + AMP + diphosphate + H(+). Its function is as follows. Catalyzes the 2-thiolation of uridine at the wobble position (U34) of tRNA, leading to the formation of s(2)U34. The protein is tRNA-specific 2-thiouridylase MnmA of Burkholderia cenocepacia (strain HI2424).